Reading from the N-terminus, the 349-residue chain is N-acetyl-gamma-glutamyl-phosphate reductase (349 aa).

Cys153 is an active-site residue.

It belongs to the NAGSA dehydrogenase family. Type 1 subfamily.

The protein resides in the cytoplasm. It catalyses the reaction N-acetyl-L-glutamate 5-semialdehyde + phosphate + NADP(+) = N-acetyl-L-glutamyl 5-phosphate + NADPH + H(+). Its pathway is amino-acid biosynthesis; L-arginine biosynthesis; N(2)-acetyl-L-ornithine from L-glutamate: step 3/4. In terms of biological role, catalyzes the NADPH-dependent reduction of N-acetyl-5-glutamyl phosphate to yield N-acetyl-L-glutamate 5-semialdehyde. The polypeptide is N-acetyl-gamma-glutamyl-phosphate reductase (Magnetococcus marinus (strain ATCC BAA-1437 / JCM 17883 / MC-1)).